The following is a 91-amino-acid chain: Large ribosomal subunit protein bL27 (91 aa).

The disordered stretch occupies residues methionine 1–glycine 22. Over residues glutamine 7–glutamine 19 the composition is skewed to polar residues.

The protein belongs to the bacterial ribosomal protein bL27 family.

The protein is Large ribosomal subunit protein bL27 of Myxococcus xanthus (strain DK1622).